The sequence spans 304 residues: tRNA pseudouridine synthase A (304 aa).

D65 (nucleophile) is an active-site residue. Residue Y123 coordinates substrate. A disordered region spans residues 274–304; it reads HTGQEKPEARLGNGDLESREERPPHEMSPLH. Residues 289 to 298 are compositionally biased toward basic and acidic residues; sequence LESREERPPH.

The protein belongs to the tRNA pseudouridine synthase TruA family. As to quaternary structure, homodimer.

The catalysed reaction is uridine(38/39/40) in tRNA = pseudouridine(38/39/40) in tRNA. In terms of biological role, formation of pseudouridine at positions 38, 39 and 40 in the anticodon stem and loop of transfer RNAs. The polypeptide is tRNA pseudouridine synthase A (Gloeobacter violaceus (strain ATCC 29082 / PCC 7421)).